The primary structure comprises 206 residues: Small ribosomal subunit protein uS4 (206 aa).

The S4 RNA-binding domain maps to 96 to 156; sequence CRLDNVVYRM…EKAKNQLRIV (61 aa).

The protein belongs to the universal ribosomal protein uS4 family. As to quaternary structure, part of the 30S ribosomal subunit. Contacts protein S5. The interaction surface between S4 and S5 is involved in control of translational fidelity.

Functionally, one of the primary rRNA binding proteins, it binds directly to 16S rRNA where it nucleates assembly of the body of the 30S subunit. In terms of biological role, with S5 and S12 plays an important role in translational accuracy. The sequence is that of Small ribosomal subunit protein uS4 from Pseudomonas fluorescens (strain Pf0-1).